The chain runs to 67 residues: Myrmicitoxin(1)-Pm6a (67 aa).

The signal sequence occupies residues 1–25; it reads MRSLYLSFSLTIIFVLVIMHAEAKA. A propeptide spanning residues 26–37 is cleaved from the precursor; sequence ISEPNAIAEADP. Residue Val66 is modified to Valine amide.

It belongs to the formicidae venom clade 3 family. Expressed by the venom gland.

Its subcellular location is the secreted. Its function is as follows. Toxin that causes a rapid and irreversible paralysis when intrathoracically injected into insects (blowflies). Does not cause spontaneous nocifensive behaviors by intraplantar injection in mice. Exhibits hemolytic and cytotoxic activities on HEK293 cells. This chain is Myrmicitoxin(1)-Pm6a, found in Pogonomyrmex maricopa (Maricopa harvester ant).